The chain runs to 215 residues: RNA pyrophosphohydrolase (215 aa).

Residues 6-149 (GFRPNVGIIL…KRDVYQLALT (144 aa)) form the Nudix hydrolase domain. The short motif at 38 to 59 (GGIKYGETPMQAMYRELHEETG) is the Nudix box element.

Belongs to the Nudix hydrolase family. RppH subfamily. It depends on a divalent metal cation as a cofactor.

In terms of biological role, accelerates the degradation of transcripts by removing pyrophosphate from the 5'-end of triphosphorylated RNA, leading to a more labile monophosphorylated state that can stimulate subsequent ribonuclease cleavage. The polypeptide is RNA pyrophosphohydrolase (Burkholderia vietnamiensis (strain G4 / LMG 22486) (Burkholderia cepacia (strain R1808))).